The following is an 81-amino-acid chain: MNRPVHNEHRRKRFAKKCPFVSAGWKTIDYKDVVTLKRFITERGKILPRRITGVSSRFQALLAQAVKRARHVGLLPFVGED.

Belongs to the bacterial ribosomal protein bS18 family. As to quaternary structure, part of the 30S ribosomal subunit. Forms a tight heterodimer with protein bS6.

In terms of biological role, binds as a heterodimer with protein bS6 to the central domain of the 16S rRNA, where it helps stabilize the platform of the 30S subunit. The polypeptide is Small ribosomal subunit protein bS18 (Chlamydia muridarum (strain MoPn / Nigg)).